We begin with the raw amino-acid sequence, 168 residues long: Protein GRIM REAPER (168 aa).

Residues 1 to 30 (MVIKIPNTFIKATSLLSLILYFLIIATSKS) form the signal peptide. An N-linked (GlcNAc...) asparagine glycan is attached at Asn59.

This sequence belongs to the STIG1 family. In terms of assembly, interacts with PRK5 and to a lower extent with PRK4. In terms of tissue distribution, highly expressed in flowers, and at very low levels in leaves.

It localises to the secreted. Its subcellular location is the extracellular space. The protein resides in the apoplast. Its function is as follows. Involved in the regulation of cell death induced by extracellular reactive oxygen species. Only the processed peptide, and not the full length GRI can bind in vivo to the extracellular domain of the receptor PRK5. The GRIp-induced cell death is superoxide and salicylic acid dependent. This is Protein GRIM REAPER from Arabidopsis thaliana (Mouse-ear cress).